A 67-amino-acid chain; its full sequence is Beta-defensin 103A (67 aa).

Positions 1–22 are cleaved as a signal peptide; it reads MRIHYLLFTLLFLFLVPVPGHG. 3 disulfide bridges follow: cysteine 33/cysteine 62, cysteine 40/cysteine 55, and cysteine 45/cysteine 63.

This sequence belongs to the beta-defensin family.

The protein resides in the secreted. Its function is as follows. Exhibits antimicrobial activity against Gram-positive and Gram-negative bacteria. The sequence is that of Beta-defensin 103A (DEFB103A) from Gorilla gorilla gorilla (Western lowland gorilla).